A 153-amino-acid chain; its full sequence is Histone H2B.3 (153 aa).

Composition is skewed to basic and acidic residues over residues 1 to 28 (MAPK…EKAL) and 36 to 53 (EKRL…EGRK). Residues 1–61 (MAPKAEKKPA…RKAGRKKAKK (61 aa)) form a disordered region. N6-acetyllysine occurs at positions 7 and 37. Residue Lys149 forms a Glycyl lysine isopeptide (Lys-Gly) (interchain with G-Cter in ubiquitin) linkage.

It belongs to the histone H2B family. In terms of assembly, the nucleosome is a histone octamer containing two molecules each of H2A, H2B, H3 and H4 assembled in one H3-H4 heterotetramer and two H2A-H2B heterodimers. The octamer wraps approximately 147 bp of DNA. Post-translationally, can be acetylated to form H2BK6ac and H2BK33ac. Monoubiquitinated by BRE1 to form H2BK143ub1 and deubiquitinated by UBP26. Required for heterochromatic histone H3 di- and trimethylation at H3K4me. May give a specific tag for epigenetic transcriptional activation.

The protein resides in the nucleus. Its subcellular location is the chromosome. Core component of nucleosome. Nucleosomes wrap and compact DNA into chromatin, limiting DNA accessibility to the cellular machineries which require DNA as a template. Histones thereby play a central role in transcription regulation, DNA repair, DNA replication and chromosomal stability. DNA accessibility is regulated via a complex set of post-translational modifications of histones, also called histone code, and nucleosome remodeling. In Oryza sativa subsp. indica (Rice), this protein is Histone H2B.3 (H2B.3).